Reading from the N-terminus, the 97-residue chain is Putative membrane protein insertion efficiency factor (97 aa).

It belongs to the UPF0161 family.

Its subcellular location is the cell membrane. In terms of biological role, could be involved in insertion of integral membrane proteins into the membrane. In Lactobacillus gasseri (strain ATCC 33323 / DSM 20243 / BCRC 14619 / CIP 102991 / JCM 1131 / KCTC 3163 / NCIMB 11718 / NCTC 13722 / AM63), this protein is Putative membrane protein insertion efficiency factor.